Reading from the N-terminus, the 785-residue chain is Cation/H(+) antiporter 1 (785 aa).

The next 12 membrane-spanning stretches (helical) occupy residues 19 to 39, 44 to 64, 79 to 99, 112 to 132, 143 to 163, 179 to 199, 201 to 221, 240 to 260, 294 to 314, 323 to 343, 352 to 372, and 389 to 409; these read LNTM…FYLF, GQAG…LTII, YYIF…GLEI, IVIT…FLWF, FLTF…PVVI, LAIS…TIVL, FISG…GVII, YLSK…ALTI, YPIH…RFSV, LVLG…VLFA, QYWL…LVLL, and MFVA…SLLL.

It belongs to the monovalent cation:proton antiporter 2 (CPA2) transporter (TC 2.A.37) family. CHX (TC 2.A.37.4) subfamily. Specifically expressed in pollen.

It is found in the membrane. In terms of biological role, may operate as a cation/H(+) antiporter. In Arabidopsis thaliana (Mouse-ear cress), this protein is Cation/H(+) antiporter 1 (CHX1).